Here is a 429-residue protein sequence, read N- to C-terminus: MNNIVDTAIEAIVAREILDSRGRPTIEAEVHLLSGAVGLAQVPSGASTGTFEAHELRDKDKSRYGGKGVLKAVHNVNEILAPKLIDLDALNQELIDRTMIALDGSGNKSNLGANAILAVSLAAARAGAESLGIPLYRYLGGPLANLLPVPLMNVINGGAHASNNVDFQEFMIVPVGATSFREALRWGAEVFATLSEVLHDKGLLTGVGDEGGFAPNLESNQVALELLVAAIEKAGYKPGEQVALALDVAASEFYKEGQYVYDGRPHAPTEFIDYLGQLVDQYPIVSIEDGLHEEDWQHWQLLTQKVGSRVQLVGDDLFVTNATRLQKGIQEKAGNAILIKLNQIGSLTETLETIDLGTRNGFRSVISHRSGETEDTTIADLAVATRAGQIKTGSLCRSERVAKYNRLLRIEDELGDRAVYAGAVGLGPK.

Glutamine 168 contacts (2R)-2-phosphoglycerate. Glutamate 210 (proton donor) is an active-site residue. Positions 247, 288, and 315 each coordinate Mg(2+). Positions 340, 369, 370, and 391 each coordinate (2R)-2-phosphoglycerate. Lysine 340 (proton acceptor) is an active-site residue.

This sequence belongs to the enolase family. Mg(2+) serves as cofactor.

The protein resides in the cytoplasm. It localises to the secreted. Its subcellular location is the cell surface. The enzyme catalyses (2R)-2-phosphoglycerate = phosphoenolpyruvate + H2O. It functions in the pathway carbohydrate degradation; glycolysis; pyruvate from D-glyceraldehyde 3-phosphate: step 4/5. Catalyzes the reversible conversion of 2-phosphoglycerate (2-PG) into phosphoenolpyruvate (PEP). It is essential for the degradation of carbohydrates via glycolysis. This chain is Enolase, found in Nostoc sp. (strain PCC 7120 / SAG 25.82 / UTEX 2576).